A 566-amino-acid polypeptide reads, in one-letter code: Oxygen-dependent choline dehydrogenase (566 aa).

Position 7-36 (7-36) interacts with FAD; the sequence is DYIICGAGSAGNVLATRLTEDPNVTVLLLE. A disordered region spans residues 185-204; sequence EGFGPMDRTVTPKGRRASTA. Histidine 474 serves as the catalytic Proton acceptor.

It belongs to the GMC oxidoreductase family. The cofactor is FAD.

It carries out the reaction choline + A = betaine aldehyde + AH2. It catalyses the reaction betaine aldehyde + NAD(+) + H2O = glycine betaine + NADH + 2 H(+). It participates in amine and polyamine biosynthesis; betaine biosynthesis via choline pathway; betaine aldehyde from choline (cytochrome c reductase route): step 1/1. Its function is as follows. Involved in the biosynthesis of the osmoprotectant glycine betaine. Catalyzes the oxidation of choline to betaine aldehyde and betaine aldehyde to glycine betaine at the same rate. The chain is Oxygen-dependent choline dehydrogenase from Burkholderia vietnamiensis (strain G4 / LMG 22486) (Burkholderia cepacia (strain R1808)).